The sequence spans 679 residues: Sodium-dependent phosphate transporter 1 (679 aa).

6 helical membrane-spanning segments follow: residues 21–41, 62–82, 100–120, 158–178, 203–223, and 230–250; these read YLWM…SVGA, ACIL…AKVS, GLLM…QLVA, IVMS…ILFF, ACTV…LLGF, and GTIL…WFFV. Residues S265 and S269 each carry the phosphoserine modification. 4 consecutive transmembrane segments (helical) span residues 511-531, 558-578, 600-620, and 650-670; these read VSLL…FAHG, VATP…GLWV, FSIE…GLPI, and IFMA…AIMA. The interval 550 to 558 is a; it reads DTGDVSSKV.

Belongs to the inorganic phosphate transporter (PiT) (TC 2.A.20) family. In terms of tissue distribution, ubiquitously expressed.

It localises to the cell membrane. It catalyses the reaction 2 Na(+)(out) + phosphate(out) = 2 Na(+)(in) + phosphate(in). Functionally, sodium-phosphate symporter which preferentially transports the monovalent form of phosphate with a stoichiometry of two sodium ions per phosphate ion. May play a role in extracellular matrix and cartilage calcification as well as in vascular calcification. Essential for cell proliferation but this function is independent of its phosphate transporter activity. Its function is as follows. (Microbial infection) May function as a retroviral receptor as it confers human cells susceptibility to infection to Gibbon Ape Leukemia Virus (GaLV), Simian sarcoma-associated virus (SSAV) and Feline leukemia virus subgroup B (FeLV-B) as well as 10A1 murine leukemia virus (10A1 MLV). The protein is Sodium-dependent phosphate transporter 1 (SLC20A1) of Homo sapiens (Human).